Here is a 276-residue protein sequence, read N- to C-terminus: NADPH-dependent 7-cyano-7-deazaguanine reductase (276 aa).

83–85 (IES) serves as a coordination point for substrate. 85–86 (SK) is a binding site for NADPH. Cysteine 184 (thioimide intermediate) is an active-site residue. Aspartate 191 (proton donor) is an active-site residue. Substrate is bound at residue 223–224 (HE). 252–253 (RG) is a binding site for NADPH.

The protein belongs to the GTP cyclohydrolase I family. QueF type 2 subfamily. As to quaternary structure, homodimer.

It is found in the cytoplasm. It catalyses the reaction 7-aminomethyl-7-carbaguanine + 2 NADP(+) = 7-cyano-7-deazaguanine + 2 NADPH + 3 H(+). It participates in tRNA modification; tRNA-queuosine biosynthesis. Catalyzes the NADPH-dependent reduction of 7-cyano-7-deazaguanine (preQ0) to 7-aminomethyl-7-deazaguanine (preQ1). The protein is NADPH-dependent 7-cyano-7-deazaguanine reductase of Pseudomonas savastanoi pv. phaseolicola (strain 1448A / Race 6) (Pseudomonas syringae pv. phaseolicola (strain 1448A / Race 6)).